The primary structure comprises 227 residues: Cytochrome c oxidase subunit 2 (227 aa).

Over 1–14 the chain is Mitochondrial intermembrane; the sequence is MAYPMQLGFQDATS. The helical transmembrane segment at 15 to 45 threads the bilayer; the sequence is PIMEELLHFHDHTLMIVFLISSLVLYIISLM. The Mitochondrial matrix portion of the chain corresponds to 46–59; the sequence is LTTKLTHTSTMDAQ. Residues 60–87 traverse the membrane as a helical segment; that stretch reads EVETVWTILPAIILILIALPSLRILYMM. Residues 88–227 lie on the Mitochondrial intermembrane side of the membrane; it reads DEINNPSLTV…HFEEWSASMS (140 aa). Residues H161, C196, E198, C200, H204, and M207 each coordinate Cu cation. Residue E198 coordinates Mg(2+).

This sequence belongs to the cytochrome c oxidase subunit 2 family. Component of the cytochrome c oxidase (complex IV, CIV), a multisubunit enzyme composed of 14 subunits. The complex is composed of a catalytic core of 3 subunits MT-CO1, MT-CO2 and MT-CO3, encoded in the mitochondrial DNA, and 11 supernumerary subunits COX4I, COX5A, COX5B, COX6A, COX6B, COX6C, COX7A, COX7B, COX7C, COX8 and NDUFA4, which are encoded in the nuclear genome. The complex exists as a monomer or a dimer and forms supercomplexes (SCs) in the inner mitochondrial membrane with NADH-ubiquinone oxidoreductase (complex I, CI) and ubiquinol-cytochrome c oxidoreductase (cytochrome b-c1 complex, complex III, CIII), resulting in different assemblies (supercomplex SCI(1)III(2)IV(1) and megacomplex MCI(2)III(2)IV(2)). Found in a complex with TMEM177, COA6, COX18, COX20, SCO1 and SCO2. Interacts with TMEM177 in a COX20-dependent manner. Interacts with COX20. Interacts with COX16. It depends on Cu cation as a cofactor.

The protein localises to the mitochondrion inner membrane. It catalyses the reaction 4 Fe(II)-[cytochrome c] + O2 + 8 H(+)(in) = 4 Fe(III)-[cytochrome c] + 2 H2O + 4 H(+)(out). Its function is as follows. Component of the cytochrome c oxidase, the last enzyme in the mitochondrial electron transport chain which drives oxidative phosphorylation. The respiratory chain contains 3 multisubunit complexes succinate dehydrogenase (complex II, CII), ubiquinol-cytochrome c oxidoreductase (cytochrome b-c1 complex, complex III, CIII) and cytochrome c oxidase (complex IV, CIV), that cooperate to transfer electrons derived from NADH and succinate to molecular oxygen, creating an electrochemical gradient over the inner membrane that drives transmembrane transport and the ATP synthase. Cytochrome c oxidase is the component of the respiratory chain that catalyzes the reduction of oxygen to water. Electrons originating from reduced cytochrome c in the intermembrane space (IMS) are transferred via the dinuclear copper A center (CU(A)) of subunit 2 and heme A of subunit 1 to the active site in subunit 1, a binuclear center (BNC) formed by heme A3 and copper B (CU(B)). The BNC reduces molecular oxygen to 2 water molecules using 4 electrons from cytochrome c in the IMS and 4 protons from the mitochondrial matrix. The chain is Cytochrome c oxidase subunit 2 (MT-CO2) from Antilocapra americana (Pronghorn).